A 104-amino-acid chain; its full sequence is Large ribosomal subunit protein bL21 (104 aa).

It belongs to the bacterial ribosomal protein bL21 family. In terms of assembly, part of the 50S ribosomal subunit. Contacts protein L20.

Functionally, this protein binds to 23S rRNA in the presence of protein L20. The polypeptide is Large ribosomal subunit protein bL21 (Leptospira interrogans serogroup Icterohaemorrhagiae serovar copenhageni (strain Fiocruz L1-130)).